A 768-amino-acid chain; its full sequence is Cullin-3 (768 aa).

A disordered region spans residues V677–D698. Over residues G682 to D698 the composition is skewed to basic and acidic residues. The Cullin neddylation domain maps to D698–D760. K712 participates in a covalent cross-link: Glycyl lysine isopeptide (Lys-Gly) (interchain with G-Cter in NEDD8).

Belongs to the cullin family. Component of multiple BCR (BTB-CUL3-RBX1) E3 ubiquitin-protein ligase complexes formed of cul3, rbx1 and a variable BTB domain-containing protein acting as both, adapter to cullin and substrate recognition subunit. Interacts with btbd6. In terms of processing, neddylated. Attachment of NEDD8 is required for the E3 ubiquitin-protein ligase activity of the SCF-like complex.

It is found in the nucleus. It functions in the pathway protein modification; protein ubiquitination. Functionally, probable core component of cullin-based SCF-like E3 ubiquitin-protein ligase complexes which mediate the ubiquitination and subsequent proteasomal degradation of target proteins. The E3 ubiquitin-protein ligase activity of the complex is dependent on the neddylation of the cullin subunit. Involved in ER-Golgi transport by regulating the size of COPII coats, thereby playing a key role in collagen export, which is required for embryonic stem (ES) cells division. May play a role in the regulation of mittotic entry via ubiquitination of aurka. This Xenopus tropicalis (Western clawed frog) protein is Cullin-3 (cul3).